We begin with the raw amino-acid sequence, 210 residues long: Uracil phosphoribosyltransferase (210 aa).

5-phospho-alpha-D-ribose 1-diphosphate-binding positions include arginine 78, arginine 103, and 130-138; that span reads DPMLATGGS. Residues isoleucine 193 and 198–200 contribute to the uracil site; that span reads GDA. Aspartate 199 is a binding site for 5-phospho-alpha-D-ribose 1-diphosphate.

It belongs to the UPRTase family. It depends on Mg(2+) as a cofactor.

The enzyme catalyses UMP + diphosphate = 5-phospho-alpha-D-ribose 1-diphosphate + uracil. It participates in pyrimidine metabolism; UMP biosynthesis via salvage pathway; UMP from uracil: step 1/1. With respect to regulation, allosterically activated by GTP. Functionally, catalyzes the conversion of uracil and 5-phospho-alpha-D-ribose 1-diphosphate (PRPP) to UMP and diphosphate. The polypeptide is Uracil phosphoribosyltransferase (Salinibacter ruber (strain DSM 13855 / M31)).